The sequence spans 704 residues: MARQVGLANVRNIGIMAHIDAGKTTTTERILYYTGRLHRMGEVHDGGATMDWMEQEKERGITITSAATTCFWEPKGGNFVDVKHRINIIDTPGHVDFTVEVERSLRVLDGAVALFCAVGGVEPQSETVWRQANKYKVPRIAYVNKMDRVGADFYAAVKAVKERLGANPVPIQIPIGQGEIFAGVVDLIRMKGIIYDKEDGSTFEEVEIPHDLETEAKHWRINMLEAVSEVDETLLEKYLEGEDITEAEVRKVLREATLNGSIIPALCGSSFKNKGVQFMLDAVIEYLPSPVDVGSVTGHHPGDDSGISRKPSDDEPFAGLAFKIATDPFVGKLTFFRVYSGVLEAGSYVLNALTGKKERVGRLMQMHSNKREDRDAVFAGDIAAAVGLKDVKTGDTLCDAGKPIVLEKMVFPEPVIQIAIEPKTKADSDKLGVSLGKLAEEDPTFRVSSDEETGQTLIAGMGELHLEVLVDRLKREFKVEANVGQPQVAYRETIRGTVEHEGKFVRQSGGKGQFGLVNIKVEPLEEGKGYEFVDAIKGGVVPKEYIPAVSAGIQEAMKDGVVAGYPVQDVKVTLYDGKYHDVDSSEMSFKIAGSIGFKGAARKANPVLLEPIMKVEVITPEEYLGDVMGDLSSRRGHIDGMGERAGAQFVKASVPLAQMFGYSTVLRSMTQGRANYTMEFECYNEVPKSVAEALQEKSGVKGDG.

Residues 8 to 291 (ANVRNIGIMA…AVIEYLPSPV (284 aa)) form the tr-type G domain. Residues 17–24 (AHIDAGKT), 90–94 (DTPGH), and 144–147 (NKMD) each bind GTP.

This sequence belongs to the TRAFAC class translation factor GTPase superfamily. Classic translation factor GTPase family. EF-G/EF-2 subfamily.

It is found in the cytoplasm. Its function is as follows. Catalyzes the GTP-dependent ribosomal translocation step during translation elongation. During this step, the ribosome changes from the pre-translocational (PRE) to the post-translocational (POST) state as the newly formed A-site-bound peptidyl-tRNA and P-site-bound deacylated tRNA move to the P and E sites, respectively. Catalyzes the coordinated movement of the two tRNA molecules, the mRNA and conformational changes in the ribosome. This is Elongation factor G from Chlorobium phaeobacteroides (strain BS1).